The primary structure comprises 62 residues: DNA-directed RNA polymerase subunit Rpo10 (62 aa).

Zn(2+) contacts are provided by Cys6, Cys9, Cys43, and Cys44.

Belongs to the archaeal Rpo10/eukaryotic RPB10 RNA polymerase subunit family. As to quaternary structure, part of the RNA polymerase complex. Requires Zn(2+) as cofactor.

Its subcellular location is the cytoplasm. It carries out the reaction RNA(n) + a ribonucleoside 5'-triphosphate = RNA(n+1) + diphosphate. Functionally, DNA-dependent RNA polymerase (RNAP) catalyzes the transcription of DNA into RNA using the four ribonucleoside triphosphates as substrates. The polypeptide is DNA-directed RNA polymerase subunit Rpo10 (Methanosphaerula palustris (strain ATCC BAA-1556 / DSM 19958 / E1-9c)).